Consider the following 100-residue polypeptide: Small ribosomal subunit protein uS14c (100 aa).

This sequence belongs to the universal ribosomal protein uS14 family. Part of the 30S ribosomal subunit.

Its subcellular location is the plastid. It localises to the chloroplast. Its function is as follows. Binds 16S rRNA, required for the assembly of 30S particles. The polypeptide is Small ribosomal subunit protein uS14c (Nephroselmis olivacea (Green alga)).